Consider the following 673-residue polypeptide: tRNA 5-methylaminomethyl-2-thiouridine biosynthesis bifunctional protein MnmC (673 aa).

Positions M1–P245 are tRNA (mnm(5)s(2)U34)-methyltransferase. Residues I272 to V673 are FAD-dependent cmnm(5)s(2)U34 oxidoreductase.

In the N-terminal section; belongs to the methyltransferase superfamily. tRNA (mnm(5)s(2)U34)-methyltransferase family. It in the C-terminal section; belongs to the DAO family. It depends on FAD as a cofactor.

The protein localises to the cytoplasm. The catalysed reaction is 5-aminomethyl-2-thiouridine(34) in tRNA + S-adenosyl-L-methionine = 5-methylaminomethyl-2-thiouridine(34) in tRNA + S-adenosyl-L-homocysteine + H(+). In terms of biological role, catalyzes the last two steps in the biosynthesis of 5-methylaminomethyl-2-thiouridine (mnm(5)s(2)U) at the wobble position (U34) in tRNA. Catalyzes the FAD-dependent demodification of cmnm(5)s(2)U34 to nm(5)s(2)U34, followed by the transfer of a methyl group from S-adenosyl-L-methionine to nm(5)s(2)U34, to form mnm(5)s(2)U34. The sequence is that of tRNA 5-methylaminomethyl-2-thiouridine biosynthesis bifunctional protein MnmC from Serratia proteamaculans (strain 568).